The following is a 398-amino-acid chain: Phosphoglycerate kinase (398 aa).

Residues 23 to 25 (DFN), Arg38, 61 to 64 (HMGK), Arg122, and Arg155 each bind substrate. ATP contacts are provided by residues Lys206, Gly297, Glu328, and 354-357 (GGDS).

This sequence belongs to the phosphoglycerate kinase family. In terms of assembly, monomer.

Its subcellular location is the cytoplasm. The enzyme catalyses (2R)-3-phosphoglycerate + ATP = (2R)-3-phospho-glyceroyl phosphate + ADP. The protein operates within carbohydrate degradation; glycolysis; pyruvate from D-glyceraldehyde 3-phosphate: step 2/5. This chain is Phosphoglycerate kinase, found in Clostridium botulinum (strain Langeland / NCTC 10281 / Type F).